A 93-amino-acid polypeptide reads, in one-letter code: Acylphosphatase (93 aa).

The 89-residue stretch at 5 to 93 (TAILRVTGFV…EERKTFDIVY (89 aa)) folds into the Acylphosphatase-like domain. Active-site residues include arginine 20 and asparagine 38.

Belongs to the acylphosphatase family.

The enzyme catalyses an acyl phosphate + H2O = a carboxylate + phosphate + H(+). This is Acylphosphatase (acyP) from Listeria monocytogenes serotype 4b (strain F2365).